A 205-amino-acid chain; its full sequence is Ribosomal RNA small subunit methyltransferase G (205 aa).

S-adenosyl-L-methionine is bound by residues glycine 76, leucine 81, 127 to 128 (IE), and arginine 140.

It belongs to the methyltransferase superfamily. RNA methyltransferase RsmG family.

It localises to the cytoplasm. It carries out the reaction guanosine(527) in 16S rRNA + S-adenosyl-L-methionine = N(7)-methylguanosine(527) in 16S rRNA + S-adenosyl-L-homocysteine. Specifically methylates the N7 position of guanine in position 527 of 16S rRNA. The sequence is that of Ribosomal RNA small subunit methyltransferase G from Francisella tularensis subsp. holarctica (strain FTNF002-00 / FTA).